An 87-amino-acid polypeptide reads, in one-letter code: Small ribosomal subunit protein uS17 (87 aa).

The protein belongs to the universal ribosomal protein uS17 family. Part of the 30S ribosomal subunit.

In terms of biological role, one of the primary rRNA binding proteins, it binds specifically to the 5'-end of 16S ribosomal RNA. This chain is Small ribosomal subunit protein uS17, found in Geobacillus kaustophilus (strain HTA426).